A 223-amino-acid chain; its full sequence is Twisted gastrulation protein homolog 1 (223 aa).

The N-terminal stretch at 1 to 25 (MKLHYVAVLTLAILMFLTWLPASLS) is a signal peptide. Residues N52 and N81 are each glycosylated (N-linked (GlcNAc...) asparagine).

It belongs to the twisted gastrulation protein family. In terms of assembly, interacts with CHRD and BMP4. This interaction enhances CHRD/BMP4 complex formation. Interacts with BMP7.

Its subcellular location is the secreted. In terms of biological role, may be involved in dorsoventral axis formation. Seems to antagonize BMP signaling by forming ternary complexes with CHRD and BMPs, thereby preventing BMPs from binding to their receptors. In addition to the anti-BMP function, also has pro-BMP activity, partly mediated by cleavage and degradation of CHRD, which releases BMPs from ternary complexes. May be an important modulator of BMP-regulated cartilage development and chondrocyte differentiation. May play a role in thymocyte development. This chain is Twisted gastrulation protein homolog 1 (TWSG1), found in Pongo abelii (Sumatran orangutan).